We begin with the raw amino-acid sequence, 326 residues long: Tetraacyldisaccharide 4'-kinase (326 aa).

ATP is bound at residue 55–62 (TVGGNGKT).

This sequence belongs to the LpxK family.

The enzyme catalyses a lipid A disaccharide + ATP = a lipid IVA + ADP + H(+). It participates in glycolipid biosynthesis; lipid IV(A) biosynthesis; lipid IV(A) from (3R)-3-hydroxytetradecanoyl-[acyl-carrier-protein] and UDP-N-acetyl-alpha-D-glucosamine: step 6/6. Its function is as follows. Transfers the gamma-phosphate of ATP to the 4'-position of a tetraacyldisaccharide 1-phosphate intermediate (termed DS-1-P) to form tetraacyldisaccharide 1,4'-bis-phosphate (lipid IVA). This Tolumonas auensis (strain DSM 9187 / NBRC 110442 / TA 4) protein is Tetraacyldisaccharide 4'-kinase.